The sequence spans 347 residues: GMP reductase (347 aa).

Residue 108 to 131 (ADFEKTVQILALNPALNFVCIDVA) participates in NADP(+) binding. Gly-181 and Gly-183 together coordinate K(+). The active-site Thioimidate intermediate is Cys-186. Residue 216 to 239 (IVSDGGCTMPGDVAKAFGGGADFV) participates in NADP(+) binding.

It belongs to the IMPDH/GMPR family. GuaC type 1 subfamily. In terms of assembly, homotetramer.

The enzyme catalyses IMP + NH4(+) + NADP(+) = GMP + NADPH + 2 H(+). Functionally, catalyzes the irreversible NADPH-dependent deamination of GMP to IMP. It functions in the conversion of nucleobase, nucleoside and nucleotide derivatives of G to A nucleotides, and in maintaining the intracellular balance of A and G nucleotides. The sequence is that of GMP reductase from Salmonella choleraesuis (strain SC-B67).